Consider the following 456-residue polypeptide: MKIEEVKSTVRTQRIAAHSHVKGLGLDEAGSALQSAAGLVGQKAAREAAGIVVDLIKSKKMAGRALLLAGPPGTGKTAIALAIAQELGNKVPFCPMVGSEVFSNEIKKTEVLMENFRRSIGLRIRETKEVYEGEVTELTPVETENPMGGYGKTISNVVIGLKTAKGTKQLKLDPSIFDALQKEKVEVGDVIYIEANSGAVKRQGRSDTFATEFDLETEEYVPLPKGDVHKKKEVIQDVTLHDLDVANARPQGGQDVLSMVGQLMKPKKTEITDKLRMEINKVVNKYIDQGIAELVPGVLFIDEIHMLDLETFTYLHKSLESPIAPIVIFATNRGRCVIRGTTDIVSPHGIPLDLLDRLLIIRTLLYSTSDMEQIIKLRAQTEGLQLEDPAFARLSEIGTSSTLRYAVQLLTPAHQMCKVNGRTQITKDDIEDVHSLFLDAKRSSKHLSEKNNKFML.

70-77 (GPPGTGKT) is a binding site for ATP.

The protein belongs to the RuvB family. In terms of assembly, forms homohexameric rings. May form a dodecamer with rept made of two stacked hexameric rings. Component of the chromatin remodeling Ino80 complex.

The protein resides in the nucleus. The enzyme catalyses ATP + H2O = ADP + phosphate + H(+). Its function is as follows. Acts as a transcriptional coactivator in Wg signaling caused by altered arm signaling. Pont and rept interfere antagonistically with nuclear arm signaling function, and are required to enhance or reduce arm activity, respectively. Also an essential cofactor for the normal function of Myc; required for cellular proliferation and growth. In terms of biological role, proposed core component of the chromatin remodeling Ino80 complex which is involved in transcriptional regulation, DNA replication and probably DNA repair. The sequence is that of RuvB-like helicase 1 from Drosophila pseudoobscura pseudoobscura (Fruit fly).